The primary structure comprises 283 residues: Bifunctional protein FolD (283 aa).

Residues 164–166 (GRS), S189, and I230 each bind NADP(+).

The protein belongs to the tetrahydrofolate dehydrogenase/cyclohydrolase family. In terms of assembly, homodimer.

The enzyme catalyses (6R)-5,10-methylene-5,6,7,8-tetrahydrofolate + NADP(+) = (6R)-5,10-methenyltetrahydrofolate + NADPH. It catalyses the reaction (6R)-5,10-methenyltetrahydrofolate + H2O = (6R)-10-formyltetrahydrofolate + H(+). Its pathway is one-carbon metabolism; tetrahydrofolate interconversion. Catalyzes the oxidation of 5,10-methylenetetrahydrofolate to 5,10-methenyltetrahydrofolate and then the hydrolysis of 5,10-methenyltetrahydrofolate to 10-formyltetrahydrofolate. In Lactobacillus delbrueckii subsp. bulgaricus (strain ATCC BAA-365 / Lb-18), this protein is Bifunctional protein FolD.